The sequence spans 288 residues: UPF0761 membrane protein HSM_1104 (288 aa).

6 consecutive transmembrane segments (helical) span residues 36 to 56 (TLALVPLIMVFFSVFAAFPVF), 92 to 112 (QMSAVGIISLIVVALMLIHSI), 127 to 147 (PAIFSFAIYWLILTLGPIVIA), 176 to 196 (LLSLMPFFLTWFIFTVLYMVV), 200 to 220 (KVSIIHSAAGALIAAVFFTLG), and 240 to 260 (AMATLPIMLLWIQLSWTAVLL).

This sequence belongs to the UPF0761 family.

It is found in the cell inner membrane. The polypeptide is UPF0761 membrane protein HSM_1104 (Histophilus somni (strain 2336) (Haemophilus somnus)).